We begin with the raw amino-acid sequence, 435 residues long: Type A flavoprotein fprA (435 aa).

The zinc metallo-hydrolase stretch occupies residues 48-228 (ANGTTYNAYA…PFRSFVAQVL (181 aa)). Fe cation is bound by residues His-98, Glu-100, Asp-102, His-167, Asp-186, and His-243. The 140-residue stretch at 276-415 (LLIFYVSAYR…EGRAFGRRLA (140 aa)) folds into the Flavodoxin-like domain.

This sequence in the N-terminal section; belongs to the zinc metallo-hydrolase group 3 family. In terms of assembly, homodimer. FMN is required as a cofactor. Requires Fe cation as cofactor.

In terms of biological role, low-potential electron donor to a number of redox enzymes. This is Type A flavoprotein fprA (fprA) from Rhodobacter capsulatus (Rhodopseudomonas capsulata).